The primary structure comprises 786 residues: Leucine-rich repeat extensin-like protein 2 (786 aa).

Residues 1–28 (MLLFPSTSLRLFFFLFLLFSSCFLQIRG) form the signal peptide. N-linked (GlcNAc...) asparagine glycans are attached at residues Asn73 and Asn79. 9 LRR repeats span residues 100-124 (TRVV…LGLL), 125-147 (TDLA…TFKH), 149-172 (KLLF…VLSL), 173-196 (PSLK…LFDK), 198-219 (LDAI…MGNS), 221-243 (VSAL…GLMG), 244-267 (KTLN…IGNL), 268-291 (KNVT…IGNM), and 292-315 (KSLE…ICQL). N-linked (GlcNAc...) asparagine glycans are attached at residues Asn255 and Asn269. 2 N-linked (GlcNAc...) asparagine glycosylation sites follow: Asn320 and Asn346. Disordered regions lie at residues 352–372 (IDGK…SRSV), 390–589 (FKMS…YYAV), 624–645 (PPVY…YYPP), and 694–786 (PPPS…IPYY). Over residues 353 to 362 (DGKEDQRSSK) the composition is skewed to basic and acidic residues. The interval 384 to 786 (SPPPPSFKMS…SPPPPSIPYY (403 aa)) is contains the Ser-Pro(4) repeats. Pro residues-rich tracts occupy residues 460-477 (YPPP…PPPS), 487-542 (YPPP…PPPK), and 566-589 (SPPP…YYAV). 4 stretches are compositionally biased toward pro residues: residues 694–713 (PPPS…PPST), 720–737 (PASP…PPPK), 752–769 (PTPP…PLPP), and 777–786 (SPPPPSIPYY).

Post-translationally, hydroxylated on proline residues in the S-P-P-P-P repeat. O-glycosylated on hydroxyprolines. As to expression, mostly expressed in roots, also present in stems at low levels. In roots, confined to differentiation zones, the collet, and meristematic cells of tips.

The protein resides in the secreted. It is found in the cell wall. Modulates cell morphogenesis by regulating cell wall formation and assembly, and/or growth polarization. Together with LRX2, component of the extracellular mechanism regulating root hair morphogenesis and elongation. The polypeptide is Leucine-rich repeat extensin-like protein 2 (LRX2) (Arabidopsis thaliana (Mouse-ear cress)).